The sequence spans 97 residues: Aspartyl/glutamyl-tRNA(Asn/Gln) amidotransferase subunit C (97 aa).

It belongs to the GatC family. In terms of assembly, heterotrimer of A, B and C subunits.

The enzyme catalyses L-glutamyl-tRNA(Gln) + L-glutamine + ATP + H2O = L-glutaminyl-tRNA(Gln) + L-glutamate + ADP + phosphate + H(+). It catalyses the reaction L-aspartyl-tRNA(Asn) + L-glutamine + ATP + H2O = L-asparaginyl-tRNA(Asn) + L-glutamate + ADP + phosphate + 2 H(+). Allows the formation of correctly charged Asn-tRNA(Asn) or Gln-tRNA(Gln) through the transamidation of misacylated Asp-tRNA(Asn) or Glu-tRNA(Gln) in organisms which lack either or both of asparaginyl-tRNA or glutaminyl-tRNA synthetases. The reaction takes place in the presence of glutamine and ATP through an activated phospho-Asp-tRNA(Asn) or phospho-Glu-tRNA(Gln). This Prochlorococcus marinus (strain MIT 9313) protein is Aspartyl/glutamyl-tRNA(Asn/Gln) amidotransferase subunit C.